Here is a 359-residue protein sequence, read N- to C-terminus: Splicing factor 3B subunit 4 (359 aa).

2 RRM domains span residues Ala-13–Lys-91 and Ala-98–Lys-176. Disordered regions lie at residues Gly-198–Thr-239 and Gln-293–Pro-337. Low complexity-rich tracts occupy residues Gln-202–Gln-231 and Gln-293–Gln-302. Over residues His-303–Pro-312 the composition is skewed to basic residues.

The protein belongs to the SF3B4 family. As to quaternary structure, component of splicing factor SF3B which is composed of at least eight subunits.

Its subcellular location is the nucleus. Its function is as follows. Subunit of the splicing factor SF3B required for 'A' complex assembly formed by the stable binding of U2 snRNP to the branchpoint sequence (BPS) in pre-mRNA. Sequence independent binding of SF3A/SF3B complex upstream of the branch site is essential, it may anchor U2 snRNP to the pre-mRNA. May also be involved in the assembly of the 'E' complex. Has been found in complex 'B' and 'C' as well. In Dictyostelium discoideum (Social amoeba), this protein is Splicing factor 3B subunit 4 (sf3b4).